The following is a 255-amino-acid chain: dTDP-3-amino-3,6-dideoxy-alpha-D-glucopyranose N,N-dimethyltransferase (255 aa).

S-adenosyl-L-methionine is bound by residues tyrosine 14, tyrosine 22, tyrosine 33, alanine 58, 58-59 (AC), glutamate 79, 101-102 (DM), and methionine 117.

The protein belongs to the methyltransferase TylM1/DesVI family. Homodimer.

The enzyme catalyses dTDP-3-amino-3,6-dideoxy-alpha-D-glucose + 2 S-adenosyl-L-methionine = dTDP-alpha-D-mycaminose + 2 S-adenosyl-L-homocysteine + 2 H(+). It functions in the pathway antibiotic biosynthesis; tylosin biosynthesis. In terms of biological role, S-adenosyl-L-methionine-dependent methyltransferase involved in the biosynthesis of mycaminose, an essential structural component of the macrolide antibiotic tylosin. Involved in the last step in mycaminose biosynthesis by mediating dimethylation of the hexose C-3' amino group. This is dTDP-3-amino-3,6-dideoxy-alpha-D-glucopyranose N,N-dimethyltransferase (tylM1) from Streptomyces fradiae (Streptomyces roseoflavus).